The primary structure comprises 154 residues: MIHFILLFSRQGKLRLQKWYITLPDKERKKITREIVQIILSRGHRTSSFVDWKELKLVYKRYASLYFCCAIENQDNELLTLEIVHRYVELLDKYFGNVCELDIIFNFEKAYFILDEFIIGGEIQETSKKIAVKAIEDSDMLQEVSTVSQTMGER.

It belongs to the adaptor complexes small subunit family. As to quaternary structure, adaptor protein complex 1 (AP-1) is a heterotetramer composed of two large adaptins (gamma-type subunit AP1G1 and beta-type subunit AP1B1), a medium adaptin (mu-type subunit AP1M1 or AP1M2) and a small adaptin (sigma-type subunit AP1S1 or AP1S2 or AP1S3). Widely expressed.

It is found in the golgi apparatus. The protein localises to the cytoplasmic vesicle membrane. The protein resides in the membrane. Its subcellular location is the clathrin-coated pit. Its function is as follows. Subunit of clathrin-associated adaptor protein complex 1 that plays a role in protein sorting in the late-Golgi/trans-Golgi network (TGN) and/or endosomes. The AP complexes mediate both the recruitment of clathrin to membranes and the recognition of sorting signals within the cytosolic tails of transmembrane cargo molecules. Involved in TLR3 trafficking. The sequence is that of AP-1 complex subunit sigma-3 (AP1S3) from Homo sapiens (Human).